Here is a 251-residue protein sequence, read N- to C-terminus: Octanoyltransferase (251 aa).

Positions 56-237 (ADTGDEIWVV…RLIANLDGES (182 aa)) constitute a BPL/LPL catalytic domain. Substrate-binding positions include 96 to 103 (RGGQITYH), 168 to 170 (ALG), and 181 to 183 (GLS). The active-site Acyl-thioester intermediate is Cys-199.

The protein belongs to the LipB family.

Its subcellular location is the cytoplasm. The enzyme catalyses octanoyl-[ACP] + L-lysyl-[protein] = N(6)-octanoyl-L-lysyl-[protein] + holo-[ACP] + H(+). The protein operates within protein modification; protein lipoylation via endogenous pathway; protein N(6)-(lipoyl)lysine from octanoyl-[acyl-carrier-protein]: step 1/2. In terms of biological role, catalyzes the transfer of endogenously produced octanoic acid from octanoyl-acyl-carrier-protein onto the lipoyl domains of lipoate-dependent enzymes. Lipoyl-ACP can also act as a substrate although octanoyl-ACP is likely to be the physiological substrate. This Burkholderia ambifaria (strain MC40-6) protein is Octanoyltransferase.